A 113-amino-acid chain; its full sequence is Flagellar transcriptional regulator FlhD (113 aa).

Belongs to the FlhD family. Homodimer; disulfide-linked. Forms a heterohexamer composed of two FlhC and four FlhD subunits. Each FlhC binds a FlhD dimer, forming a heterotrimer, and a hexamer assembles by dimerization of two heterotrimers.

Its subcellular location is the cytoplasm. Its function is as follows. Functions in complex with FlhC as a master transcriptional regulator that regulates transcription of several flagellar and non-flagellar operons by binding to their promoter region. Activates expression of class 2 flagellar genes, including fliA, which is a flagellum-specific sigma factor that turns on the class 3 genes. Also regulates genes whose products function in a variety of physiological pathways. The polypeptide is Flagellar transcriptional regulator FlhD (Salmonella typhi).